The chain runs to 498 residues: Putative antiporter subunit mnhD2 (498 aa).

Helical transmembrane passes span 2–22 (LSNLLILPMLLPFLCALILVF), 32–52 (YLYLGTMTITTIISLMLLIYV), 78–98 (LSLIMVTTASFVITLIMAYGF), 108–128 (YHLPSFILFLSVGVIGSFLTS), 130–150 (LFNLYVMFEIMLLASFVLITL), 161–181 (IIYVVLNIIGSWLFLLGIGLL), 209–229 (ISLIFLVAFSAKAALVLFMWL), 240–260 (LAALFAALMTKVGAYALIRFF), 271–291 (IHPLLVTMAAITMVIGAIGVI), 308–328 (IGFIILGLGTNTFAGINGAIF), 330–350 (LVNDIVVKTLLFFIIGSLVYI), 368–388 (FFGVAFIIMIFAIGGVPPFSG), 403–423 (GNYIGLALMIITSLIAMYSLF), and 450–470 (GILSILVVVVIAIGIAAPVLL).

The protein belongs to the CPA3 antiporters (TC 2.A.63) subunit D family. As to quaternary structure, may form a heterooligomeric complex that consists of seven subunits: mnhA2, mnhB2, mnhC2, mnhD2, mnhE2, mnhF2 and mnhG2.

It is found in the cell membrane. The polypeptide is Putative antiporter subunit mnhD2 (mnhD2) (Staphylococcus aureus (strain MRSA252)).